Consider the following 252-residue polypeptide: Enolase-phosphatase E1 (252 aa).

The Mg(2+) site is built by Asp14 and Glu16. Residues 142–143 (SS) and Lys176 contribute to the substrate site. Asp201 is a binding site for Mg(2+).

It belongs to the HAD-like hydrolase superfamily. MasA/MtnC family. As to quaternary structure, monomer. The cofactor is Mg(2+).

It localises to the cytoplasm. Its subcellular location is the nucleus. The catalysed reaction is 5-methylsulfanyl-2,3-dioxopentyl phosphate + H2O = 1,2-dihydroxy-5-(methylsulfanyl)pent-1-en-3-one + phosphate. The protein operates within amino-acid biosynthesis; L-methionine biosynthesis via salvage pathway; L-methionine from S-methyl-5-thio-alpha-D-ribose 1-phosphate: step 3/6. It functions in the pathway amino-acid biosynthesis; L-methionine biosynthesis via salvage pathway; L-methionine from S-methyl-5-thio-alpha-D-ribose 1-phosphate: step 4/6. Functionally, bifunctional enzyme that catalyzes the enolization of 2,3-diketo-5-methylthiopentyl-1-phosphate (DK-MTP-1-P) into the intermediate 2-hydroxy-3-keto-5-methylthiopentenyl-1-phosphate (HK-MTPenyl-1-P), which is then dephosphorylated to form the acireductone 1,2-dihydroxy-3-keto-5-methylthiopentene (DHK-MTPene). The sequence is that of Enolase-phosphatase E1 from Drosophila ananassae (Fruit fly).